Here is a 339-residue protein sequence, read N- to C-terminus: MTISAPPIIDIRQAGLESSIPDQVVEGLTKEVKTLPALLFYSTKGIQHWNRHSHAADFYPRHEELCILKAEASKMAASIAQDSLVIDMGSASMDKVILLLEALEEQKKSITYYALDLSYSELASNFQAIPVDRFHYVRFAALHGTFDDGLHWLQNAPDIRNRPRCILLFGLTIGNFSRDNAASFLRNIAQSALSTSPTQSSIIVSLDSCKLPTKILRAYTADGVVPFALASLSYANSLFHPKGDRKIFNEEDWYFHSEWNHALGRHEASLITQSKDIQLGAPLETVIVRRDEKIRFGCSYKYDKAERDQLFHSAGLEDAAVWTAPDCDVAFYQLRLRLN.

It belongs to the methyltransferase superfamily. In terms of assembly, homodimer.

It carries out the reaction 4-(3-methylbut-2-enyl)-L-tryptophan + S-adenosyl-L-methionine = 4-(3-methylbut-2-enyl)-L-abrine + S-adenosyl-L-homocysteine + H(+). Its pathway is alkaloid biosynthesis; ergot alkaloid biosynthesis. Its function is as follows. 4-dimethylallyltryptophan N-methyltransferase; part of the gene cluster that mediates the biosynthesis of fumiclavanine C, a fungal ergot alkaloid. DmaW catalyzes the first step of ergot alkaloid biosynthesis by condensing dimethylallyl diphosphate (DMAP) and tryptophan to form 4-dimethylallyl-L-tryptophan. The second step is catalyzed by the methyltransferase easF that methylates 4-dimethylallyl-L-tryptophan in the presence of S-adenosyl-L-methionine, resulting in the formation of 4-dimethylallyl-L-abrine. The catalase easC and the FAD-dependent oxidoreductase easE then transform 4-dimethylallyl-L-abrine to chanoclavine-I which is further oxidized by EasD in the presence of NAD(+), resulting in the formation of chanoclavine-I aldehyde. EasA reduces chanoclavine-I aldehyde to dihydrochanoclavine-I aldehyde that spontaneously dehydrates to form 6,8-dimethyl-6,7-didehydroergoline. EasG then catalyzes the reduction of 6,8-dimethyl-6,7-didehydroergoline to form festuclavine. Hydrolysis of festuclavine by easM then leads to the formation of fumigaclavine B which is in turn acetylated by easN to fumigaclavine A. Finally, easL catalyzes the conversion of fumigaclavine A into fumigaclavine C by attaching a dimethylallyl moiety to C-2 of the indole nucleus. This chain is 4-dimethylallyltryptophan N-methyltransferase easF, found in Aspergillus fumigatus (strain ATCC MYA-4609 / CBS 101355 / FGSC A1100 / Af293) (Neosartorya fumigata).